Consider the following 309-residue polypeptide: MNQEVYDLVIIGAGPAGLAAAVYAKRSGLNVIIVEKQFPGGKIALTSNVENYLGINSIPGPELAYKMYEQVLNLNVSIIYEAADEISLKEKYKKIKLTTQTLITKTVIIATGTENRRLNILGELEFENKGISYCAICDGPLYKNKAVSVIGSGNSAVEEAIYLATIAKEVHLIANKPQFKAEQQLVQIANNTPNIKIYYNKQTFEFFGHQFLEGLKFRDLITNEVTTLNIEANFTFIGLLPSRINTNNLCIFNEVNGFITTDKNMQTSVCGIFAAGDIVDKNVRQIATATNDGVIAALYAKEYITRNNW.

35–42 contacts FAD; it reads EKQFPGGK. A disulfide bond links Cys-134 and Cys-137. Residue 277-286 participates in FAD binding; the sequence is DIVDKNVRQI.

This sequence belongs to the class-II pyridine nucleotide-disulfide oxidoreductase family. Homodimer. FAD is required as a cofactor.

It localises to the cytoplasm. It carries out the reaction [thioredoxin]-dithiol + NADP(+) = [thioredoxin]-disulfide + NADPH + H(+). In Ureaplasma parvum serovar 3 (strain ATCC 700970), this protein is Thioredoxin reductase (trxB).